Reading from the N-terminus, the 399-residue chain is uncharacterized protein (399 aa).

8 WD repeats span residues glutamate 59–glutamine 99, glycine 102–threonine 141, glutamate 144–tyrosine 185, histidine 187–arginine 227, glutamate 241–serine 280, alanine 283–serine 322, proline 324–glutamate 363, and glycine 366–histidine 399.

Its subcellular location is the cytoplasm. The protein resides in the nucleus. This is an uncharacterized protein from Schizosaccharomyces pombe (strain 972 / ATCC 24843) (Fission yeast).